Reading from the N-terminus, the 253-residue chain is MATSQQFLNPTLFKSLASSNKNSCTLCPSPFLQLKSASTIFNYKPLTSSSATIITRVAASSSDSGESITRETFHGLCFVLKDNIDTDQIIPAEYGTLIPSIPEDREKLGSFALNGLPKFYNERFVVPGEMKSKYSVIIGGDNFGCGSSREHAPVCLGAAGAKAVVAESYARIFFRNCVATGEIFPLESEVRICDECKTGDVVTIEHKEDGSSLLINHTTRKEYKLKPLGDAGPVIDAGGIFAYARKAGMIPSA.

Residues 1–56 constitute a chloroplast transit peptide; sequence MATSQQFLNPTLFKSLASSNKNSCTLCPSPFLQLKSASTIFNYKPLTSSSATIITR.

It belongs to the LeuD family. As to quaternary structure, heterodimer of the large LEUC/IIL1 subunit and the small LEUD (SSU1, SSU2 or SSU3) subunits. As to expression, expressed in vascular bundles of roots, cotyledons and rosette leaves. Expressed in stem vascular bundles which branche off into lateral inflorescences. Expressed in connective tissues in anthers. In hypocotyls, expressed in parenchyma cells surrounding the vasculature. In rosette leaves, expressed in phloem cells and cells close to the xylem along the vascular bundles. In roots of adult plants, expressed in cells closely associated with the stele. In flowering stalks, expressed in parenchyma cells associated with the phloem or the xylem.

It localises to the plastid. The protein localises to the chloroplast stroma. It catalyses the reaction (2R,3S)-3-isopropylmalate = (2S)-2-isopropylmalate. The enzyme catalyses a 2-(omega-methylsulfanyl)alkylmalate = a 2-(omega-methylsulfanyl)alkylmaleate + H2O. It carries out the reaction 2-(3-methylsulfanyl)propylmalate = 2-(2-methylsulfanyl)propylmaleate + H2O. The catalysed reaction is a 3-(omega-methylsulfanyl)alkylmalate = a 2-(omega-methylsulfanyl)alkylmaleate + H2O. It catalyses the reaction 2-(2-methylsulfanyl)ethylmalate = 2-(2-methylsulfanyl)ethylmaleate + H2O. The enzyme catalyses 3-(2-methylsulfanyl)ethylmalate = 2-(2-methylsulfanyl)ethylmaleate + H2O. It carries out the reaction 3-(3-methylsulfanyl)propylmalate = 2-(2-methylsulfanyl)propylmaleate + H2O. The protein operates within amino-acid biosynthesis; L-leucine biosynthesis; L-leucine from 3-methyl-2-oxobutanoate: step 2/4. In terms of biological role, catalyzes the isomerization between 2-isopropylmalate and 3-isopropylmalate, via the formation of 2-isopropylmaleate. Functions redundantly with LEUD1 in the methionine chain elongation pathway of aliphatic glucosinolate formation. The protein is 3-isopropylmalate dehydratase small subunit 3 of Arabidopsis thaliana (Mouse-ear cress).